Reading from the N-terminus, the 493-residue chain is MDTAQPAMTAPPAQAAADEPVGRVTAVRGAVIDVAFDTGALPMIEDALVITTDDGQPIIAEVQAHLDEGTVRALALRSTNGLRRGAPVRAAGGPIEVPVGEAMLGRLIDVSGVPGDNGTPLPPGTPRRPIHRKPPPLASQGAETRIFATGIKVIDLLTPLAQGGKAAMFGGAGVGKTVLVMELIHAMVERYQGISVFAGVGERCREGHEMLTDMRHSGVLPRTVLVYGQMNEPPGARWRVPLTALTVAEYFRDERHQNVLLLMDNVFRFVQAGAEVSGLLGRLPSRVGYQPTLATEVAGLQERIVSVGDVSVTAIEAVYVPADDFTDPAVTAIAAHVDSMVVLSRSMAAEGMYPAIDPIASSSVLLDPLVVGGEHARIAIEVRRAVEHYRELQDVISLLGVEELGADDRRIVGRARRLQRFLTQPFAVTEAFTGVPGRSVPVADTLAGCKAILDGNCDDWQESSLYMVGTLDEAREREQATRNAKPVSEHAEP.

The disordered stretch occupies residues 113–138 (VPGDNGTPLPPGTPRRPIHRKPPPLA). 170–177 (GGAGVGKT) provides a ligand contact to ATP.

It belongs to the ATPase alpha/beta chains family. As to quaternary structure, F-type ATPases have 2 components, CF(1) - the catalytic core - and CF(0) - the membrane proton channel. CF(1) has five subunits: alpha(3), beta(3), gamma(1), delta(1), epsilon(1). CF(0) has three main subunits: a(1), b(2) and c(9-12). The alpha and beta chains form an alternating ring which encloses part of the gamma chain. CF(1) is attached to CF(0) by a central stalk formed by the gamma and epsilon chains, while a peripheral stalk is formed by the delta and b chains.

The protein localises to the cell inner membrane. It carries out the reaction ATP + H2O + 4 H(+)(in) = ADP + phosphate + 5 H(+)(out). Functionally, produces ATP from ADP in the presence of a proton gradient across the membrane. The catalytic sites are hosted primarily by the beta subunits. The protein is ATP synthase subunit beta 3 of Paraburkholderia xenovorans (strain LB400).